A 430-amino-acid polypeptide reads, in one-letter code: Adenylosuccinate synthetase (430 aa).

GTP contacts are provided by residues 13 to 19 and 41 to 43; these read GDEGKGK and GHT. Aspartate 14 functions as the Proton acceptor in the catalytic mechanism. Positions 14 and 41 each coordinate Mg(2+). Residues 14 to 17, 39 to 42, threonine 130, arginine 144, glutamine 225, threonine 240, and arginine 304 contribute to the IMP site; these read DEGK and NAGH. The Proton donor role is filled by histidine 42. 300–306 provides a ligand contact to substrate; that stretch reads ASTGRPR. GTP-binding positions include arginine 306, 332-334, and 414-416; these read KLD and STG.

The protein belongs to the adenylosuccinate synthetase family. As to quaternary structure, homodimer. It depends on Mg(2+) as a cofactor.

The protein localises to the cytoplasm. It catalyses the reaction IMP + L-aspartate + GTP = N(6)-(1,2-dicarboxyethyl)-AMP + GDP + phosphate + 2 H(+). Its pathway is purine metabolism; AMP biosynthesis via de novo pathway; AMP from IMP: step 1/2. Functionally, plays an important role in the de novo pathway of purine nucleotide biosynthesis. Catalyzes the first committed step in the biosynthesis of AMP from IMP. This chain is Adenylosuccinate synthetase, found in Xanthomonas campestris pv. campestris (strain 8004).